Reading from the N-terminus, the 443-residue chain is Probable glycine dehydrogenase (decarboxylating) subunit 1 (443 aa).

Belongs to the GcvP family. N-terminal subunit subfamily. The glycine cleavage system is composed of four proteins: P, T, L and H. In this organism, the P 'protein' is a heterodimer of two subunits.

It catalyses the reaction N(6)-[(R)-lipoyl]-L-lysyl-[glycine-cleavage complex H protein] + glycine + H(+) = N(6)-[(R)-S(8)-aminomethyldihydrolipoyl]-L-lysyl-[glycine-cleavage complex H protein] + CO2. The glycine cleavage system catalyzes the degradation of glycine. The P protein binds the alpha-amino group of glycine through its pyridoxal phosphate cofactor; CO(2) is released and the remaining methylamine moiety is then transferred to the lipoamide cofactor of the H protein. This Nitratidesulfovibrio vulgaris (strain ATCC 29579 / DSM 644 / CCUG 34227 / NCIMB 8303 / VKM B-1760 / Hildenborough) (Desulfovibrio vulgaris) protein is Probable glycine dehydrogenase (decarboxylating) subunit 1.